Reading from the N-terminus, the 356-residue chain is MKELVNILDFLPEELGEKIKPMFRVKQIYQWIYQKYANNFSDMSSLPKDLRLELARNFHFSPVKCVKNEQSKDGSIKYLFELIDGLRVESVLLPMKEEKIDAEGKRISHARYTICVSSQVGCKSGCSFCLTAKGGLKRNLSAGEIVGQILWIKKQNNIPYERRVNIVYMGMGEPLDNLKNVSKAVKILAQNEGLAISPRRQTISTSGLAKQIKELGQMNLGVLLAISLHAVNDELRTELMPINKAYNIAAIMDAVREFPIDQRKRVMFEYLLIDGINDKLEHAKELVKLLNGIKAKVNLILFNPHEGSLYKRPSLENAIKFQDLLSNKGVTCTIRESKGLDISAACGQLKERAKEQ.

Catalysis depends on E89, which acts as the Proton acceptor. Residues 108 to 341 enclose the Radical SAM core domain; that stretch reads SHARYTICVS…CTIRESKGLD (234 aa). Residues C115 and C346 are joined by a disulfide bond. The [4Fe-4S] cluster site is built by C122, C126, and C129. S-adenosyl-L-methionine contacts are provided by residues 172-173, S204, 227-229, and N303; these read GE and SLH. C346 serves as the catalytic S-methylcysteine intermediate.

This sequence belongs to the radical SAM superfamily. RlmN family. Requires [4Fe-4S] cluster as cofactor.

It localises to the cytoplasm. The enzyme catalyses adenosine(2503) in 23S rRNA + 2 reduced [2Fe-2S]-[ferredoxin] + 2 S-adenosyl-L-methionine = 2-methyladenosine(2503) in 23S rRNA + 5'-deoxyadenosine + L-methionine + 2 oxidized [2Fe-2S]-[ferredoxin] + S-adenosyl-L-homocysteine. The catalysed reaction is adenosine(37) in tRNA + 2 reduced [2Fe-2S]-[ferredoxin] + 2 S-adenosyl-L-methionine = 2-methyladenosine(37) in tRNA + 5'-deoxyadenosine + L-methionine + 2 oxidized [2Fe-2S]-[ferredoxin] + S-adenosyl-L-homocysteine. Its function is as follows. Specifically methylates position 2 of adenine 2503 in 23S rRNA and position 2 of adenine 37 in tRNAs. m2A2503 modification seems to play a crucial role in the proofreading step occurring at the peptidyl transferase center and thus would serve to optimize ribosomal fidelity. In Campylobacter jejuni subsp. jejuni serotype O:2 (strain ATCC 700819 / NCTC 11168), this protein is Dual-specificity RNA methyltransferase RlmN.